Reading from the N-terminus, the 526-residue chain is MWILIYLFIIWSSLRTWVTAVDSTTTVGDDLNETVSTSVWPTMSPQMTVAFRSQRDVMGNLTIDQLPYVGLNLRRVLLNNETSMVNEGNNTRLLTLFKSMLSSEANAFVLDLEQYNNDLRVVDTTLLFSDVLIALQSFIFSTQNNLYANIIVLLLNISAPELDSTEYRHQNQTLNTTYILDKNLGNSFIYKPTDLQSDRAKNNTWNIYGKSSIDGWPTLGSVLYEQKKRLVIGELTDFFNETTAPYIFPHDVFHYEQGNSTLDCPSTVEGLTDLSSIHWRFLDSLFNSVDIKEYISCGLSPIISNSAYVNNVTQLADIIHEGSVWSWDSDQPSVTQSTSKSGSSSGTLEAYNCVLLYYFANNETVTWRVGNCYNSNIGLCRYENMAFRWLVRSNKATYFDFDSYQGSKCPDQYSFNIPRSPLEQRSFIAYMRNSSFSDTQIWIDLNSISVSNCWVSGGPYASCPYEKVISRRNFVTMMVPASVCSFALLCIVVYLSVLRVPIYDNRKNWRRVINKISKSELEGVPS.

An N-terminal signal peptide occupies residues 1-20; sequence MWILIYLFIIWSSLRTWVTA. Over 21-477 the chain is Extracellular; the sequence is VDSTTTVGDD…VISRRNFVTM (457 aa). Asn-32, Asn-60, Asn-80, Asn-89, Asn-156, Asn-171, Asn-175, Asn-202, Asn-240, Asn-259, Asn-311, Asn-362, and Asn-433 each carry an N-linked (GlcNAc...) asparagine glycan. A helical membrane pass occupies residues 478–498; that stretch reads MVPASVCSFALLCIVVYLSVL. Residues 499–526 are Cytoplasmic-facing; sequence RVPIYDNRKNWRRVINKISKSELEGVPS.

This sequence belongs to the MTC6 family.

It localises to the membrane. In terms of biological role, may be involved in telomere capping. The chain is Maintenance of telomere capping protein 6 (MTC6) from Saccharomyces cerevisiae (strain RM11-1a) (Baker's yeast).